The sequence spans 151 residues: Ribosome maturation factor RimP (151 aa).

This sequence belongs to the RimP family.

It is found in the cytoplasm. In terms of biological role, required for maturation of 30S ribosomal subunits. The protein is Ribosome maturation factor RimP of Caldicellulosiruptor saccharolyticus (strain ATCC 43494 / DSM 8903 / Tp8T 6331).